Here is a 374-residue protein sequence, read N- to C-terminus: uncharacterized protein (374 aa).

Residues 39 to 66 adopt a coiled-coil conformation; that stretch reads RDVRKHLESRDAKQELIDSLEEAVRDSR.

This is an uncharacterized protein from Mycobacterium tuberculosis (strain CDC 1551 / Oshkosh).